The chain runs to 257 residues: UPF0246 protein YaaA (257 aa).

It belongs to the UPF0246 family.

This is UPF0246 protein YaaA from Salmonella agona (strain SL483).